A 207-amino-acid polypeptide reads, in one-letter code: Large ribosomal subunit protein uL4 (207 aa).

The interval 49-78 (HAVKNRSAVSGGGRKPWRQKGTGRARQGSI) is disordered.

The protein belongs to the universal ribosomal protein uL4 family. As to quaternary structure, part of the 50S ribosomal subunit.

One of the primary rRNA binding proteins, this protein initially binds near the 5'-end of the 23S rRNA. It is important during the early stages of 50S assembly. It makes multiple contacts with different domains of the 23S rRNA in the assembled 50S subunit and ribosome. Functionally, forms part of the polypeptide exit tunnel. The polypeptide is Large ribosomal subunit protein uL4 (Streptococcus gordonii (strain Challis / ATCC 35105 / BCRC 15272 / CH1 / DL1 / V288)).